We begin with the raw amino-acid sequence, 401 residues long: Odorant receptor 88a (401 aa).

Over Met-1–Gln-26 the chain is Cytoplasmic. A helical membrane pass occupies residues Met-27–Val-47. The Extracellular segment spans residues Pro-48–Ser-52. Residues Ala-53–Leu-73 traverse the membrane as a helical segment. The Cytoplasmic segment spans residues Gly-74–Arg-142. A helical membrane pass occupies residues Ile-143–Thr-163. Residues His-164–Asn-191 lie on the Extracellular side of the membrane. A helical membrane pass occupies residues Phe-192–Val-212. Topologically, residues Thr-213–Lys-277 are cytoplasmic. A helical transmembrane segment spans residues Val-278–Leu-298. Residues Ser-299–Asp-303 lie on the Extracellular side of the membrane. The chain crosses the membrane as a helical span at residues Val-304–Ile-324. Residues Cys-325–Gln-370 lie on the Cytoplasmic side of the membrane. The chain crosses the membrane as a helical span at residues Leu-371 to Ala-391. Residues Tyr-392–His-401 are Extracellular-facing.

It belongs to the insect chemoreceptor superfamily. Heteromeric odorant receptor channel (TC 1.A.69) family. Or49a subfamily. In terms of assembly, interacts with Orco. Complexes exist early in the endomembrane system in olfactory sensory neurons (OSNs), coupling these complexes to the conserved ciliary trafficking pathway. Expressed in olfactory sensory neurons in the antenna.

The protein resides in the cell membrane. Odorant receptor which mediates acceptance or avoidance behavior, depending on its substrates. The odorant receptor repertoire encodes a large collection of odor stimuli that vary widely in identity, intensity, and duration. May form a complex with Orco to form odorant-sensing units, providing sensitive and prolonged odorant signaling and calcium permeability. The chain is Odorant receptor 88a (Or88a) from Drosophila melanogaster (Fruit fly).